The primary structure comprises 374 residues: Tetraacyldisaccharide 4'-kinase (374 aa).

66–73 lines the ATP pocket; that stretch reads TAGGTGKT.

It belongs to the LpxK family.

The catalysed reaction is a lipid A disaccharide + ATP = a lipid IVA + ADP + H(+). Its pathway is glycolipid biosynthesis; lipid IV(A) biosynthesis; lipid IV(A) from (3R)-3-hydroxytetradecanoyl-[acyl-carrier-protein] and UDP-N-acetyl-alpha-D-glucosamine: step 6/6. Functionally, transfers the gamma-phosphate of ATP to the 4'-position of a tetraacyldisaccharide 1-phosphate intermediate (termed DS-1-P) to form tetraacyldisaccharide 1,4'-bis-phosphate (lipid IVA). The protein is Tetraacyldisaccharide 4'-kinase of Syntrophus aciditrophicus (strain SB).